Consider the following 548-residue polypeptide: Phenylalanine--tRNA ligase beta subunit (548 aa).

Positions 271–346 (LSEAAAKLDP…ISIGYEALGP (76 aa)) constitute a B5 domain. Mg(2+) contacts are provided by aspartate 324, aspartate 330, glutamate 333, and aspartate 334.

Belongs to the phenylalanyl-tRNA synthetase beta subunit family. Type 2 subfamily. Tetramer of two alpha and two beta subunits. Requires Mg(2+) as cofactor.

The protein resides in the cytoplasm. It catalyses the reaction tRNA(Phe) + L-phenylalanine + ATP = L-phenylalanyl-tRNA(Phe) + AMP + diphosphate + H(+). The sequence is that of Phenylalanine--tRNA ligase beta subunit from Aeropyrum pernix (strain ATCC 700893 / DSM 11879 / JCM 9820 / NBRC 100138 / K1).